A 319-amino-acid chain; its full sequence is Histidinol-phosphate aminotransferase 1 (319 aa).

Lys182 is subject to N6-(pyridoxal phosphate)lysine.

It belongs to the class-II pyridoxal-phosphate-dependent aminotransferase family. Histidinol-phosphate aminotransferase subfamily. It depends on pyridoxal 5'-phosphate as a cofactor.

It carries out the reaction L-histidinol phosphate + 2-oxoglutarate = 3-(imidazol-4-yl)-2-oxopropyl phosphate + L-glutamate. Its pathway is amino-acid biosynthesis; L-histidine biosynthesis; L-histidine from 5-phospho-alpha-D-ribose 1-diphosphate: step 7/9. This is Histidinol-phosphate aminotransferase 1 (hisC1) from Archaeoglobus fulgidus (strain ATCC 49558 / DSM 4304 / JCM 9628 / NBRC 100126 / VC-16).